Consider the following 24-residue polypeptide: Brevinin-1Ra (24 aa).

Cysteine 18 and cysteine 24 are disulfide-bonded.

As to expression, expressed by the skin glands.

The protein localises to the secreted. Its function is as follows. Antimicrobial peptide. In Pelophylax ridibundus (Marsh frog), this protein is Brevinin-1Ra.